The sequence spans 163 residues: Glutathione peroxidase 2 (163 aa).

Cys-36 is a catalytic residue.

This sequence belongs to the glutathione peroxidase family.

Its subcellular location is the cytoplasm. It carries out the reaction 2 glutathione + H2O2 = glutathione disulfide + 2 H2O. Functionally, may constitute a glutathione peroxidase-like protective system against oxidative stresses. The chain is Glutathione peroxidase 2 (gpx-2) from Caenorhabditis elegans.